The primary structure comprises 332 residues: MGFGDFSTICTKAAIPLCALVGEQQINGGAGIQTNCYSRTIEIANTLIFQCANDFMHILAMVMTVIMIIHVRSKFTAVGRKEITSVFYIYLLLTIISLILDAGVTAPGSAPYPYFAAVQNGLVSALCTCLLINGFVGFQLYEDGTTLSVWLLRLCSLAMFVVSGAVSLLTFKNWAGLSSKNPIGIMIVTYIVNAIFLFVYVVSQIILVVGTLEDRWPLGDISFGVFFFVIGQVILYVFSDTICDNVQHYIDGLFFATICNLLAVMMVYKYWDSITREDLEFSVGVKQHNWEVKELLPDEDKRGTVYQDSDYTPSLYQQQYNGRHSHYSNLGH.

Transmembrane regions (helical) follow at residues 51–71 (CAND…IIHV), 86–106 (VFYI…GVTA), 121–141 (GLVS…FQLY), 149–169 (VWLL…VSLL), 182–202 (PIGI…VYVV), 218–238 (LGDI…LYVF), and 248–268 (HYID…MMVY).

It belongs to the CHS7 family. As to quaternary structure, interacts with CHS3.

It is found in the endoplasmic reticulum membrane. Its function is as follows. Chaperone required for the export of the chitin synthase CHS3 from the endoplasmic reticulum. In Phaeosphaeria nodorum (strain SN15 / ATCC MYA-4574 / FGSC 10173) (Glume blotch fungus), this protein is Chitin synthase export chaperone (CHS7).